The chain runs to 213 residues: Inactive ribonuclease-like protein 10 (213 aa).

The signal sequence occupies residues 1 to 24 (MKLTLVQIFFMMLLLLLGLGMGLG). The N-linked (GlcNAc...) asparagine glycan is linked to Asn-131.

The protein belongs to the pancreatic ribonuclease family. The N-terminus is blocked. Glycosylated. Male-specific expression in proximal caput of the epididymis.

The protein localises to the secreted. Secreted proximal epididymal protein required for post-testicular sperm maturation and male fertility. May be involved in sperm adhesion to the egg zona pellucida. Does not have ribonuclease activity. The sequence is that of Inactive ribonuclease-like protein 10 (RNASE10) from Equus caballus (Horse).